The following is a 103-amino-acid chain: Histone H4 (103 aa).

At lysine 6 the chain carries N6-acetyl-N6-methyllysine; alternate. Residues lysine 6, lysine 9, and lysine 13 each carry the N6-methyllysine; alternate modification. Position 13 is an N6-acetyl-N6-methyllysine; alternate (lysine 13). A DNA-binding region spans residues 17 to 21 (KRHRK). Lysine 92 carries the N6-glutaryllysine modification.

It belongs to the histone H4 family. The nucleosome is a histone octamer containing two molecules each of H2A, H2B, H3 and H4 assembled in one H3-H4 heterotetramer and two H2A-H2B heterodimers. The octamer wraps approximately 147 bp of DNA. Post-translationally, glutarylation at Lys-92 (H4K91glu) destabilizes nucleosomes by promoting dissociation of the H2A-H2B dimers from nucleosomes.

The protein resides in the nucleus. The protein localises to the chromosome. Functionally, core component of nucleosome. Nucleosomes wrap and compact DNA into chromatin, limiting DNA accessibility to the cellular machineries which require DNA as a template. Histones thereby play a central role in transcription regulation, DNA repair, DNA replication and chromosomal stability. DNA accessibility is regulated via a complex set of post-translational modifications of histones, also called histone code, and nucleosome remodeling. The protein is Histone H4 (H4.1) of Mortierella alpina (Oleaginous fungus).